Reading from the N-terminus, the 142-residue chain is Large ribosomal subunit protein uL13 (142 aa).

The protein belongs to the universal ribosomal protein uL13 family. Part of the 50S ribosomal subunit.

This protein is one of the early assembly proteins of the 50S ribosomal subunit, although it is not seen to bind rRNA by itself. It is important during the early stages of 50S assembly. The chain is Large ribosomal subunit protein uL13 from Shigella boydii serotype 18 (strain CDC 3083-94 / BS512).